The sequence spans 510 residues: 2,3-bisphosphoglycerate-independent phosphoglycerate mutase (510 aa).

2 residues coordinate Mn(2+): Asp-12 and Ser-62. Catalysis depends on Ser-62, which acts as the Phosphoserine intermediate. Substrate is bound by residues His-123, 153–154, Arg-185, Arg-191, 261–264, and Lys-336; these read RD and RPDR. Mn(2+) is bound by residues Asp-403, His-407, Asp-444, His-445, and His-462.

This sequence belongs to the BPG-independent phosphoglycerate mutase family. In terms of assembly, monomer. It depends on Mn(2+) as a cofactor.

The enzyme catalyses (2R)-2-phosphoglycerate = (2R)-3-phosphoglycerate. It functions in the pathway carbohydrate degradation; glycolysis; pyruvate from D-glyceraldehyde 3-phosphate: step 3/5. Essential for rapid growth and for sporulation. Catalyzes the interconversion of 2-phosphoglycerate and 3-phosphoglycerate. The protein is 2,3-bisphosphoglycerate-independent phosphoglycerate mutase of Priestia megaterium (strain DSM 319 / IMG 1521) (Bacillus megaterium).